A 159-amino-acid polypeptide reads, in one-letter code: D-aminoacyl-tRNA deacylase (159 aa).

The Gly-cisPro motif, important for rejection of L-amino acids signature appears at 146–147; that stretch reads GP.

It belongs to the DTD family. In terms of assembly, homodimer.

It is found in the cytoplasm. The enzyme catalyses glycyl-tRNA(Ala) + H2O = tRNA(Ala) + glycine + H(+). The catalysed reaction is a D-aminoacyl-tRNA + H2O = a tRNA + a D-alpha-amino acid + H(+). In terms of biological role, an aminoacyl-tRNA editing enzyme that deacylates mischarged D-aminoacyl-tRNAs. Also deacylates mischarged glycyl-tRNA(Ala), protecting cells against glycine mischarging by AlaRS. Acts via tRNA-based rather than protein-based catalysis; rejects L-amino acids rather than detecting D-amino acids in the active site. By recycling D-aminoacyl-tRNA to D-amino acids and free tRNA molecules, this enzyme counteracts the toxicity associated with the formation of D-aminoacyl-tRNA entities in vivo and helps enforce protein L-homochirality. The polypeptide is D-aminoacyl-tRNA deacylase (Bifidobacterium adolescentis (strain ATCC 15703 / DSM 20083 / NCTC 11814 / E194a)).